The sequence spans 586 residues: Putative butyrophilin subfamily 2 member A3 (586 aa).

A signal peptide spans 1-27 (MEPAAALHFSRPASLLLLLSLCALVSA). The region spanning 28–139 (QVTVVGPTDP…SCNEAILHLV (112 aa)) is the Ig-like V-type domain. The Extracellular segment spans residues 28–246 (QVTVVGPTDP…SFMPSRSPCV (219 aa)). Asn45, Asn112, Asn214, and Asn220 each carry an N-linked (GlcNAc...) asparagine glycan. A disulfide bridge connects residues Cys50 and Cys123. A helical transmembrane segment spans residues 247-267 (VILPVIMIILMIPIAICIYWI). The Cytoplasmic segment spans residues 268–586 (NNLQKEKKDS…VPQLPARKKV (319 aa)). In terms of domain architecture, B30.2/SPRY spans 281 to 474 (TFNLCLSLAG…ILICSAFTGA (194 aa)).

This sequence belongs to the immunoglobulin superfamily. BTN/MOG family.

It is found in the membrane. The sequence is that of Putative butyrophilin subfamily 2 member A3 (BTN2A3P) from Homo sapiens (Human).